Reading from the N-terminus, the 600-residue chain is Beta-hexosaminidase (600 aa).

Residues 1–18 (MRISQICTVLSTVTSAVA) form the signal peptide. Positions 19–96 (VGVNPLPAPR…PFPTPTAGAS (78 aa)) are excised as a propeptide. Threonine 78 carries an O-linked (Man...) threonine glycan. Residues serine 83 and serine 84 are each glycosylated (O-linked (Man...) serine). Catalysis depends on charge relay system residues aspartate 222 and histidine 275. Cysteine 290 and cysteine 351 are oxidised to a cystine. A glycan (N-linked (HexNAc...) asparagine) is linked at asparagine 318. Glutamate 346 serves as the catalytic Charge relay system. Residue asparagine 353 is glycosylated (N-linked (GlcNAc...) asparagine). An N-linked (HexNAc...) asparagine glycan is attached at asparagine 387. A glycan (N-linked (GlcNAc...) asparagine) is linked at asparagine 428. Cysteines 448 and 483 form a disulfide. N-linked (GlcNAc...) asparagine glycosylation is found at asparagine 500 and asparagine 525. Cysteine 583 and cysteine 590 form a disulfide bridge.

It belongs to the glycosyl hydrolase 20 family. As to quaternary structure, homodimer. Oligosaccharide moieties may also take part in the dimerization. Dimerization is a pH-dependent reversible process. The individual catalytic cores dimerize and the catalytic core of one subunit in the active dimer interacts with the propeptide of the second subunit. In terms of processing, the precursor of the propeptide is intracellularly processed in the endoplasmic reticulum by a dibasic peptidase, different from Kex2, removing Lys-97--Arg-101 from the precursor producing the activated propeptide. The propeptide binds non-covalently to the catalytic domain. Propeptide binding is necessary for full activation of the enzyme, dimerization of the catalytic domain and secretion of the active enzyme. O-glycosylated. O-glycosylation (O-mannosylation) at the C-terminus of the propeptide is necessary for full enzyme activity. N-glycosylated. N-glycosylation of the catalytic domain increases the stability and solubility of the enzyme, especially at low pH. Contains high mannose-type (M4-M11) N-glycans at the C-terminus. N-glycan deglycosylation does not affect enzyme activity.

It is found in the secreted. The catalysed reaction is Hydrolysis of terminal non-reducing N-acetyl-D-hexosamine residues in N-acetyl-beta-D-hexosaminides.. Activated by non-covalent binding of the propeptide to the catalytic domain. The concentration of the propeptide is regulated in the endoplasmic reticulum and the propeptide thus regulates the amount of the active enzyme at various stages of the growth cycle. The dimeric enzyme has about half of the maximal activity in the presence of one bound propeptide, but is fully active with two bound O-glycosylated propeptides. Inhibited by N-acetylglucosamine (NAG)-thiazoline. Functionally, selectively hydrolyzes GlcNAcbeta(1-&gt;4)GlcNAc (N,N'-diacetylchitobiose) and Gal-NAcbeta(1-&gt;4)GlcNAc, but not their C-2 epimers GlcNAcbeta(1-&gt;4)ManNAc or Gal-NAcbeta(1-&gt;4)ManNAc. However, hydrolyzes both GlcNAcbeta(1-&gt;6)GlcNAc and GlcNAcbeta(1-&gt;6)ManNAc. Part of the binary chitinolytic system. Involved in hydrolysis of chitobiose and higher chito-oligomers (produced from cell wall chitin by endochitinases), thus contributing to the formation of germ tubes, fruit-bodies and septa during hyphenation. Hydrolyzes synthetic substrate p-nitrophenyl-beta-N-acetyl-D-glucosaminide (pNP-GlcNAc). Hydrolyzes synthetic substrate p-nitrophenyl-beta-N-acetyl-D-galactosaminide (pNP-GalNAc). Hydrolyzes chromogenic substrate 4-nitrophenyl-2-acetamido-2-deoxyglucopyranoside. This chain is Beta-hexosaminidase, found in Aspergillus oryzae (Yellow koji mold).